Reading from the N-terminus, the 185-residue chain is Protein GrpE (185 aa).

The disordered stretch occupies residues 1-44; sequence MSEEELTNGPGPEPQPEPLEVESAPLEAAPAGEPDKALLEAQQQ.

This sequence belongs to the GrpE family. As to quaternary structure, homodimer.

The protein resides in the cytoplasm. Participates actively in the response to hyperosmotic and heat shock by preventing the aggregation of stress-denatured proteins, in association with DnaK and GrpE. It is the nucleotide exchange factor for DnaK and may function as a thermosensor. Unfolded proteins bind initially to DnaJ; upon interaction with the DnaJ-bound protein, DnaK hydrolyzes its bound ATP, resulting in the formation of a stable complex. GrpE releases ADP from DnaK; ATP binding to DnaK triggers the release of the substrate protein, thus completing the reaction cycle. Several rounds of ATP-dependent interactions between DnaJ, DnaK and GrpE are required for fully efficient folding. The chain is Protein GrpE from Methylococcus capsulatus (strain ATCC 33009 / NCIMB 11132 / Bath).